The sequence spans 445 residues: ATP synthase subunit b-delta (445 aa).

The segment at M1–V168 is ATP synthase subunit b. A helical transmembrane segment spans residues F4–P24. Residues A169–D445 form an ATP synthase subunit delta region.

The protein in the N-terminal section; belongs to the ATPase B chain family. In the C-terminal section; belongs to the ATPase delta chain family. In terms of assembly, F-type ATPases have 2 components, F(1) - the catalytic core - and F(0) - the membrane proton channel. F(1) has five subunits: alpha(3), beta(3), gamma(1), delta(1), epsilon(1). F(0) has three main subunits: a(1), b(2) and c(10-14). The alpha and beta chains form an alternating ring which encloses part of the gamma chain. F(1) is attached to F(0) by a central stalk formed by the gamma and epsilon chains, while a peripheral stalk is formed by the delta and b chains.

The protein localises to the cell membrane. Functionally, f(1)F(0) ATP synthase produces ATP from ADP in the presence of a proton or sodium gradient. F-type ATPases consist of two structural domains, F(1) containing the extramembraneous catalytic core and F(0) containing the membrane proton channel, linked together by a central stalk and a peripheral stalk. During catalysis, ATP synthesis in the catalytic domain of F(1) is coupled via a rotary mechanism of the central stalk subunits to proton translocation. This fusion protein includes a component of the F(0) channel (subunit b) and of the F(1) subunit (subunit delta). Two copies of subunit b and one of delta together form the peripheral 'stator' stalk which links F(1) to F(0). The chain is ATP synthase subunit b-delta (atpFH) from Mycobacterium ulcerans (strain Agy99).